Reading from the N-terminus, the 223-residue chain is Family of serine hydrolases 2 (223 aa).

Catalysis depends on charge relay system residues Ser110, Asp174, and His203.

It belongs to the AB hydrolase 3 family.

It is found in the cytoplasm. Serine hydrolase of unknown specificity. This is Family of serine hydrolases 2 (FSH2) from Saccharomyces cerevisiae (strain ATCC 204508 / S288c) (Baker's yeast).